The following is a 159-amino-acid chain: Phosphopantetheine adenylyltransferase (159 aa).

Residue Thr-10 coordinates substrate. ATP-binding positions include 10–11 (TF) and His-18. Residues Lys-42, Met-74, and Arg-88 each contribute to the substrate site. ATP contacts are provided by residues 89-91 (GLR), Glu-99, and 124-130 (WSFISSS).

The protein belongs to the bacterial CoaD family. As to quaternary structure, homohexamer. It depends on Mg(2+) as a cofactor.

It is found in the cytoplasm. The enzyme catalyses (R)-4'-phosphopantetheine + ATP + H(+) = 3'-dephospho-CoA + diphosphate. It functions in the pathway cofactor biosynthesis; coenzyme A biosynthesis; CoA from (R)-pantothenate: step 4/5. Functionally, reversibly transfers an adenylyl group from ATP to 4'-phosphopantetheine, yielding dephospho-CoA (dPCoA) and pyrophosphate. This Salmonella dublin (strain CT_02021853) protein is Phosphopantetheine adenylyltransferase.